The sequence spans 540 residues: Zinc metalloproteinase nas-10 (540 aa).

One can recognise a Peptidase M12A domain in the interval 293–500 (ASIFFEQNLI…VEILNKMYCK (208 aa)). Cystine bridges form between cysteine 339-cysteine 499, cysteine 365-cysteine 385, cysteine 504-cysteine 540, cysteine 511-cysteine 533, and cysteine 520-cysteine 537. Histidine 394 serves as a coordination point for Zn(2+). Glutamate 395 is an active-site residue. Residues histidine 398 and histidine 404 each coordinate Zn(2+). In terms of domain architecture, ShKT spans 504–540 (CDDKNVYCGAWALQDLCNNPNHNVWMRSNCRKSCNFC).

Requires Zn(2+) as cofactor.

Its function is as follows. Metalloprotease. The polypeptide is Zinc metalloproteinase nas-10 (Caenorhabditis elegans).